The chain runs to 312 residues: Small ribosomal subunit protein RACK1 (312 aa).

WD repeat units follow at residues 9-42, 63-93, 105-135, 148-180, 192-222, 233-262, and 279-307; these read GHRG…ISWK, GHTG…RMWD, KHTK…RVWN, GHED…KVWN, GHSN…LLWD, NVES…SVYD, and PSEC…RVWS.

This sequence belongs to the WD repeat G protein beta family. Ribosomal protein RACK1 subfamily.

The chain is Small ribosomal subunit protein RACK1 from Leishmania chagasi.